The following is a 264-amino-acid chain: 3-methyl-2-oxobutanoate hydroxymethyltransferase (264 aa).

Mg(2+) contacts are provided by D45 and D84. Residues D45–S46, D84, and K112 contribute to the 3-methyl-2-oxobutanoate site. Position 114 (E114) interacts with Mg(2+). Residue E181 is the Proton acceptor of the active site.

Belongs to the PanB family. As to quaternary structure, homodecamer; pentamer of dimers. Mg(2+) serves as cofactor.

It localises to the cytoplasm. It catalyses the reaction 3-methyl-2-oxobutanoate + (6R)-5,10-methylene-5,6,7,8-tetrahydrofolate + H2O = 2-dehydropantoate + (6S)-5,6,7,8-tetrahydrofolate. It functions in the pathway cofactor biosynthesis; (R)-pantothenate biosynthesis; (R)-pantoate from 3-methyl-2-oxobutanoate: step 1/2. Catalyzes the reversible reaction in which hydroxymethyl group from 5,10-methylenetetrahydrofolate is transferred onto alpha-ketoisovalerate to form ketopantoate. This is 3-methyl-2-oxobutanoate hydroxymethyltransferase from Escherichia coli O17:K52:H18 (strain UMN026 / ExPEC).